Reading from the N-terminus, the 196-residue chain is Putative archaetidylserine decarboxylase proenzyme (196 aa).

The Schiff-base intermediate with substrate; via pyruvic acid role is filled by serine 164. The residue at position 164 (serine 164) is a Pyruvic acid (Ser); by autocatalysis.

This sequence belongs to the phosphatidylserine decarboxylase family. PSD-A subfamily. As to quaternary structure, heterodimer of a large membrane-associated beta subunit and a small pyruvoyl-containing alpha subunit. The cofactor is pyruvate. Post-translationally, is synthesized initially as an inactive proenzyme. Formation of the active enzyme involves a self-maturation process in which the active site pyruvoyl group is generated from an internal serine residue via an autocatalytic post-translational modification. Two non-identical subunits are generated from the proenzyme in this reaction, and the pyruvate is formed at the N-terminus of the alpha chain, which is derived from the carboxyl end of the proenzyme. The post-translation cleavage follows an unusual pathway, termed non-hydrolytic serinolysis, in which the side chain hydroxyl group of the serine supplies its oxygen atom to form the C-terminus of the beta chain, while the remainder of the serine residue undergoes an oxidative deamination to produce ammonia and the pyruvoyl prosthetic group on the alpha chain.

The protein resides in the cell membrane. It catalyses the reaction archaetidylserine + H(+) = archaetidylethanolamine + CO2. Its function is as follows. Catalyzes the formation of archaetidylethanolamine (PtdEtn) from archaetidylserine (PtdSer). In Halobacterium salinarum (strain ATCC 700922 / JCM 11081 / NRC-1) (Halobacterium halobium), this protein is Putative archaetidylserine decarboxylase proenzyme.